We begin with the raw amino-acid sequence, 166 residues long: MKLSTKVTELTNIIAPAVAACDVALWGIEFAPQGNRSLLRIYIEALPEEQAQNKQVTIENCAAVNHQVSGILEVHDPISGEFILEVSSPGFDRAFFSDEQMHAYVGQTVSLRLIQAIGEGDKKRRKATGTLNSIDATSLKLTATDGEQFEIALSNIDKANLIYEDA.

The protein belongs to the RimP family.

Its subcellular location is the cytoplasm. Functionally, required for maturation of 30S ribosomal subunits. The sequence is that of Ribosome maturation factor RimP from Psychrobacter cryohalolentis (strain ATCC BAA-1226 / DSM 17306 / VKM B-2378 / K5).